We begin with the raw amino-acid sequence, 840 residues long: Telomere length regulation protein TEL2 homolog (840 aa).

Met-1 carries the post-translational modification N-acetylmethionine. A hydroxyproline mark is found at Pro-374, Pro-419, and Pro-422. Residues 443-497 (PEPAGDCSSVSRGPSPAPVDTESPVEMPEKAVESDVPPTQPQGSDSELDSDDEFI) form a disordered region. The residue at position 457 (Ser-457) is a Phosphoserine. Position 486 is a phosphoserine; by CK2 (Ser-486). Residues Ser-488, Ser-492, and Ser-837 each carry the phosphoserine modification. Positions 488–497 (SELDSDDEFI) are enriched in acidic residues.

Belongs to the TEL2 family. In terms of assembly, component of the TTT complex composed of TELO2, TTI1 and TTI2. Interacts with ATM, ATR, MTOR, PRKDC, RUVBL2, TTI1, TTI2, SMG1 and TRRAP. Component of the mTORC1 and mTORC2 complexes. Interacts (phosphorylated form) with PIH1D1. Interaction with PIH1D1 mediates interaction of TELO2 with the R2TP complex composed of RUVBL1, RUVBL2, PIH1D1, and RPAP3. Post-translationally, hydroxylation by PHD3 is required for a proper interaction with ATR, and activation of the ATR/CHK1/p53 pathway following DNA damage. Phosphorylated at Ser-486 by CK2 following growth factor deprivation, leading to its subsequent ubiquitination by the SCF(FBXO9) complex. Phosphorylation by CK2 only takes place when TELO2 is bound to mTORC1, not mTORC2; leading to selective ubiquitination of mTORC1-associated protein. In terms of processing, ubiquitinated by the SCF(FBXO9) complex following phosphorylation by CK2 in response to growth factor deprivation, leading to its degradation by the proteasome. Only mTORC1-associated protein is ubiquitinated and degraded, leading to selective inactivation of mTORC1 to restrain cell growth and protein translation, while mTORC2 is activated due to the relief of feedback inhibition by mTORC1.

Its subcellular location is the cytoplasm. It localises to the membrane. It is found in the nucleus. The protein localises to the chromosome. The protein resides in the telomere. Functionally, regulator of the DNA damage response (DDR). Part of the TTT complex that is required to stabilize protein levels of the phosphatidylinositol 3-kinase-related protein kinase (PIKK) family proteins. The TTT complex is involved in the cellular resistance to DNA damage stresses, like ionizing radiation (IR), ultraviolet (UV) and mitomycin C (MMC). Together with the TTT complex and HSP90 may participate in the proper folding of newly synthesized PIKKs. Promotes assembly, stabilizes and maintains the activity of mTORC1 and mTORC2 complexes, which regulate cell growth and survival in response to nutrient and hormonal signals. May be involved in telomere length regulation. This is Telomere length regulation protein TEL2 homolog (Telo2) from Mus musculus (Mouse).